The sequence spans 119 residues: Large ribosomal subunit protein bL20 (119 aa).

This sequence belongs to the bacterial ribosomal protein bL20 family.

Functionally, binds directly to 23S ribosomal RNA and is necessary for the in vitro assembly process of the 50S ribosomal subunit. It is not involved in the protein synthesizing functions of that subunit. In Saccharophagus degradans (strain 2-40 / ATCC 43961 / DSM 17024), this protein is Large ribosomal subunit protein bL20.